A 135-amino-acid polypeptide reads, in one-letter code: Calcium-binding protein KIC (135 aa).

An EF-hand domain is found at 74-109 (MSKEDAQGMVREGDLDGDGALNQTEFCVLMVRLSPE). Residues Asp87, Asp89, Asp91, and Glu98 each coordinate Ca(2+).

As to quaternary structure, interacts with KCBP (via C-terminus). KIC and calmodulin show competitive binding to KCBP. Interacts with CML42. Binds to ABCG36. As to expression, expressed in stems, leaves and flowers.

Its function is as follows. Calcium-binding regulatory protein that interacts with kinesin motor protein KCBP in a calcium-dependent manner. Inhibits KCBP microtubule binding activity and microtubule-stimulated ATPase activity. Involved in the regulation of trichome branching through its interaction with KCBP. In Arabidopsis thaliana (Mouse-ear cress), this protein is Calcium-binding protein KIC.